The chain runs to 299 residues: Protein charybde (299 aa).

Positions 73-103 (LNTRPSATPPSAGGGGPLAGGGSVGMTTPKQ) are disordered. Over residues 84–96 (AGGGGPLAGGGSV) the composition is skewed to gly residues.

Belongs to the DDIT4 family.

The protein resides in the cytoplasm. Functionally, inhibits cell growth by regulating the Tor pathway upstream of the Tsc1-Tsc2 complex and downstream of Akt1. Acts as a cell death activator during head development. The chain is Protein charybde (chrb) from Drosophila melanogaster (Fruit fly).